A 202-amino-acid polypeptide reads, in one-letter code: ATP synthase subunit b 1 (202 aa).

Residues 17-37 (IAAVLCFSVLVPLVAMAAEGG) traverse the membrane as a helical segment.

Belongs to the ATPase B chain family. In terms of assembly, F-type ATPases have 2 components, F(1) - the catalytic core - and F(0) - the membrane proton channel. F(1) has five subunits: alpha(3), beta(3), gamma(1), delta(1), epsilon(1). F(0) has three main subunits: a(1), b(2) and c(10-14). The alpha and beta chains form an alternating ring which encloses part of the gamma chain. F(1) is attached to F(0) by a central stalk formed by the gamma and epsilon chains, while a peripheral stalk is formed by the delta and b chains.

It is found in the cell inner membrane. Its function is as follows. F(1)F(0) ATP synthase produces ATP from ADP in the presence of a proton or sodium gradient. F-type ATPases consist of two structural domains, F(1) containing the extramembraneous catalytic core and F(0) containing the membrane proton channel, linked together by a central stalk and a peripheral stalk. During catalysis, ATP synthesis in the catalytic domain of F(1) is coupled via a rotary mechanism of the central stalk subunits to proton translocation. Component of the F(0) channel, it forms part of the peripheral stalk, linking F(1) to F(0). In Syntrophus aciditrophicus (strain SB), this protein is ATP synthase subunit b 1.